Consider the following 671-residue polypeptide: MITGIISILCYLQCFGTLSASVTAKNENGNFVLKNKNVELVFANGKEFLFKEFRMDGMNILPVDGSTTHPWQLIYRGPNGENPTLMPRWGEYKGGEIQKTQDASTLIFTWQMVIDAGPTCPVRILVTLGKDAELPEWRIEAEMPEGWVITESEFPRIAVNRPEGAKGILPVGFGTEYTIGNEGQLQSRYPSCTGTMQLVLMHHKGGTVYFAAQDKGGSGKVFRMKSEGKSLVFIQNVTTSYAWTQNKKFCIPWETVMGFTQKGWQDAAVQWYRPFTFETLWGAKTISERPIAEWIKNADMWLRPGEVNAETMEAVRKAMKYYGKGVGLHWYYWHNHRFDTKYPEYFPEKAGFKEMIKETQELGGFITPYINGRLWDPATDSYKTLNGKDASCRKADGTLYTEVYSSKVLNTVTCPASYIWRDVLKGVNKQILTELKTNGVYMDQIGCANSEPCYATNHGHAPGGGDWWPFAYRSLLTEMRTNLYKENQAMTTEENAECYIDLFDMMLVVNSPHNSYTKMVPLFPLIYSDRCIYSGYTYIPWRITDGSLNFMSMRSLLWGSQLGWVEPSLLMRPDAKREAKFLKNLTDFRRQQHDLFLGGRFIQEIIPTGDNPTQEIPNYEITSVVLAAEWASVSGEHVYLIVNMSEQEHKVTLPNKKQITVKALDAIRISK.

A signal peptide spans 1–24 (MITGIISILCYLQCFGTLSASVTA).

This sequence belongs to the glycoside hydrolase-like 3 (GHL3) family.

This is Putative glycoside hydrolase BT_3595 from Bacteroides thetaiotaomicron (strain ATCC 29148 / DSM 2079 / JCM 5827 / CCUG 10774 / NCTC 10582 / VPI-5482 / E50).